The sequence spans 1221 residues: WEB family protein At4g27595, chloroplastic (1221 aa).

The interval 1 to 68 (MASRTKTGLM…VSDRRTARVP (68 aa)) is disordered. A chloroplast-targeting transit peptide spans 1–82 (MASRTKTGLM…ANYFLIIICM (82 aa)). Residues 32-58 (SDGNSPSPVQSTRLSIDRSPQTVNSKP) show a composition bias toward polar residues. 3 coiled-coil regions span residues 95–149 (TGLL…AAQH), 202–543 (TEEL…FNSK), and 587–1084 (AAKE…GEEI). Residues 1073-1083 (EASSTHEKGEE) are compositionally biased toward basic and acidic residues. A disordered region spans residues 1073 to 1221 (EASSTHEKGE…LLKKKSSSQK (149 aa)). Residues 1084 to 1097 (ITNTNPFDNSTGEQ) show a composition bias toward polar residues. 2 stretches are compositionally biased toward basic and acidic residues: residues 1106-1116 (AIDRHLKDDTT) and 1129-1160 (KGEKGKDKDTVESEVYHLEKREASSERDTEHD). A compositionally biased stretch (polar residues) spans 1175–1187 (NFDQLSNGLSLAE).

Belongs to the WEB family.

Its subcellular location is the plastid. It is found in the chloroplast. This is WEB family protein At4g27595, chloroplastic from Arabidopsis thaliana (Mouse-ear cress).